The sequence spans 884 residues: Probable mixed-linked glucan synthase 9 (884 aa).

Over residues 1 to 27 the composition is skewed to low complexity; that stretch reads MALSPAAAGRTGRNNNNDAGLADPLLP. Residues 1 to 34 are disordered; that stretch reads MALSPAAAGRTGRNNNNDAGLADPLLPAGGGGGG. 2 helical membrane passes run 73 to 93 and 104 to 124; these read VLLHPYRLLTLVRLIAVVLFL and AMWLWWISIAGDFWFGVTWLL. The active site involves D195. Substrate is bound by residues D396 and D398. D565 is a catalytic residue. A run of 6 helical transmembrane segments spans residues 640–660, 672–692, 708–728, 765–785, 802–822, and 830–850; these read TAYPVSALFMVVYDLLPVIWL, FSTYVAYLVAVIAMIEVIGLV, EQFYMIGATGVYLAAVLHIVL, LLAPTVVVMAVNVTAIGAAAG, AGLVFNVWVLVLLYPFALGIM, and CALFALLVAACAAVAAGFVAV.

It belongs to the glycosyltransferase 2 family. Plant cellulose synthase-like F subfamily.

The protein localises to the golgi apparatus membrane. Functionally, may catalyze both beta-1,3 and beta-1,4 glycosidic linkage on beta-D-glucan. Essential for (1,3;1,4)-beta-D-glucans synthesis in grasses and cereals (Poaceae). The mixed-linked glucans (which are not present in walls of dicotyledons or most other monocotyledonous plants) are particularly important constituents of the walls of the starchy endosperm and aleurone cells of cereal grains such as oats, wheat, rice and barley. They can account for up to 70% by weight of the wall. This Oryza sativa subsp. japonica (Rice) protein is Probable mixed-linked glucan synthase 9 (CSLF9).